A 113-amino-acid polypeptide reads, in one-letter code: uncharacterized protein (113 aa).

The span at 1 to 19 (MDKKSAHRNPEDAKAGKYE) shows a compositional bias: basic and acidic residues. The tract at residues 1 to 94 (MDKKSAHRNP…NKWRGKRKVS (94 aa)) is disordered. Basic residues predominate over residues 20–41 (GKHKRKKKRKQNQNQHRSRHRS). Positions 52–66 (FPSSSSSSSGSQTDS) are enriched in low complexity. Basic residues predominate over residues 75 to 92 (KIKKKRREKTNKWRGKRK).

This is an uncharacterized protein from Macaca fascicularis (Crab-eating macaque).